The sequence spans 294 residues: N-acetylmuramic acid 6-phosphate etherase (294 aa).

An SIS domain is found at 54–217; the sequence is VIKSFEEEGR…STASMIGVGK (164 aa). The Proton donor role is filled by E82. The active site involves E113.

It belongs to the GCKR-like family. MurNAc-6-P etherase subfamily. In terms of assembly, homodimer.

The catalysed reaction is N-acetyl-D-muramate 6-phosphate + H2O = N-acetyl-D-glucosamine 6-phosphate + (R)-lactate. The protein operates within amino-sugar metabolism; N-acetylmuramate degradation. Specifically catalyzes the cleavage of the D-lactyl ether substituent of MurNAc 6-phosphate, producing GlcNAc 6-phosphate and D-lactate. This chain is N-acetylmuramic acid 6-phosphate etherase, found in Bacillus cereus (strain ATCC 10987 / NRS 248).